The sequence spans 147 residues: Globin (147 aa).

The Globin domain occupies serine 2–glutamine 147. Residues histidine 64 and histidine 95 each coordinate heme b.

It belongs to the globin family. Homodimer or homooligomer.

The chain is Globin from Aequiyoldia eightsii (Antarctic yoldia).